Here is a 324-residue protein sequence, read N- to C-terminus: Acetyl-coenzyme A carboxylase carboxyl transferase subunit alpha (324 aa).

The CoA carboxyltransferase C-terminal domain occupies 37-291 (ILEDKLENLE…DLMLRKTFEQ (255 aa)).

The protein belongs to the AccA family. In terms of assembly, acetyl-CoA carboxylase is a heterohexamer composed of biotin carboxyl carrier protein (AccB), biotin carboxylase (AccC) and two subunits each of ACCase subunit alpha (AccA) and ACCase subunit beta (AccD).

It is found in the cytoplasm. The enzyme catalyses N(6)-carboxybiotinyl-L-lysyl-[protein] + acetyl-CoA = N(6)-biotinyl-L-lysyl-[protein] + malonyl-CoA. The protein operates within lipid metabolism; malonyl-CoA biosynthesis; malonyl-CoA from acetyl-CoA: step 1/1. Functionally, component of the acetyl coenzyme A carboxylase (ACC) complex. First, biotin carboxylase catalyzes the carboxylation of biotin on its carrier protein (BCCP) and then the CO(2) group is transferred by the carboxyltransferase to acetyl-CoA to form malonyl-CoA. The sequence is that of Acetyl-coenzyme A carboxylase carboxyl transferase subunit alpha from Bacillus cereus (strain Q1).